We begin with the raw amino-acid sequence, 267 residues long: 26S proteasome non-ATPase regulatory subunit 8 homolog A (267 aa).

N-acetylmethionine is present on Met-1. Residues 79–251 enclose the PCI domain; that stretch reads DAFERDFFQL…APCKEIPSLQ (173 aa).

It belongs to the proteasome subunit S14 family. Component of the 19S regulatory particle (RP/PA700) lid subcomplex of the 26S proteasome. The 26S proteasome is composed of a core protease (CP), known as the 20S proteasome, capped at one or both ends by the 19S regulatory particle (RP/PA700). The RP/PA700 complex is composed of at least 17 different subunits in two subcomplexes, the base and the lid, which form the portions proximal and distal to the 20S proteolytic core, respectively. Interacts with PUB22 and PUB23. Binds to the translation initiation factors TIF3E1. Interacts with UCH1 and UCH2. Ubiquitinated by PUB22 and PUB23. Ubiquitous with highest expression in flowers.

In terms of biological role, acts as a regulatory subunit of the 26S proteasome which is involved in the ATP-dependent degradation of ubiquitinated proteins. May help to control the degradation of one or more factors that repress cytokinin signaling. Plays an important role for balancing cell expansion with cell proliferation rates during shoot development. In Arabidopsis thaliana (Mouse-ear cress), this protein is 26S proteasome non-ATPase regulatory subunit 8 homolog A.